A 333-amino-acid polypeptide reads, in one-letter code: Ferrochelatase (333 aa).

Positions 202 and 284 each coordinate Fe cation.

It belongs to the ferrochelatase family.

The protein localises to the cytoplasm. The enzyme catalyses heme b + 2 H(+) = protoporphyrin IX + Fe(2+). It functions in the pathway porphyrin-containing compound metabolism; protoheme biosynthesis; protoheme from protoporphyrin-IX: step 1/1. Its function is as follows. Catalyzes the ferrous insertion into protoporphyrin IX. The sequence is that of Ferrochelatase from Francisella tularensis subsp. holarctica (strain LVS).